The primary structure comprises 54 residues: UPF0391 membrane protein Rfer_1875 (54 aa).

The next 2 helical transmembrane spans lie at 5-25 and 30-50; these read AVVF…GIAA and IGKI…LFGL.

The protein belongs to the UPF0391 family.

It localises to the cell membrane. The sequence is that of UPF0391 membrane protein Rfer_1875 from Albidiferax ferrireducens (strain ATCC BAA-621 / DSM 15236 / T118) (Rhodoferax ferrireducens).